The primary structure comprises 335 residues: Fructose-1,6-bisphosphatase class 1 (335 aa).

Mg(2+) is bound by residues glutamate 91, aspartate 113, leucine 115, and aspartate 116. Substrate-binding positions include 116–119 (DGSS), asparagine 208, and lysine 274. Residue glutamate 280 coordinates Mg(2+).

It belongs to the FBPase class 1 family. Homotetramer. The cofactor is Mg(2+).

The protein localises to the cytoplasm. The enzyme catalyses beta-D-fructose 1,6-bisphosphate + H2O = beta-D-fructose 6-phosphate + phosphate. It participates in carbohydrate biosynthesis; gluconeogenesis. The chain is Fructose-1,6-bisphosphatase class 1 from Chromobacterium violaceum (strain ATCC 12472 / DSM 30191 / JCM 1249 / CCUG 213 / NBRC 12614 / NCIMB 9131 / NCTC 9757 / MK).